Consider the following 82-residue polypeptide: Small ribosomal subunit protein bS20 (82 aa).

Belongs to the bacterial ribosomal protein bS20 family.

Functionally, binds directly to 16S ribosomal RNA. This is Small ribosomal subunit protein bS20 from Streptococcus pyogenes serotype M12 (strain MGAS2096).